Here is a 226-residue protein sequence, read N- to C-terminus: MIDAFFIAGTDTDVGKTVASKAILDALNMKGLRTAAYKPVAAGSEDKGEGVQNSDAIHLRAVANVELRYEEVNPYALLMPASPHIAAEAENVVIDYSVLSEGLASLKEKSDVVLVEGAGGWRVPVSKDDCLSTWVQQEKLPVVLVVGIKLGCLSHAMLTAEAIQHDGLEIIGWVANRVNPGTENYAEIIKMLEDKMPAPKLGEIPYMPSVKRKNMGKYIHLEALDN.

13–18 (DVGKTV) contributes to the ATP binding site. T17 is a binding site for Mg(2+). Residue K38 is part of the active site. ATP is bound by residues D55, 116 to 119 (EGAG), and 176 to 177 (NR). Mg(2+) is bound by residues D55 and E116.

The protein belongs to the dethiobiotin synthetase family. In terms of assembly, homodimer. Requires Mg(2+) as cofactor.

It localises to the cytoplasm. It carries out the reaction (7R,8S)-7,8-diammoniononanoate + CO2 + ATP = (4R,5S)-dethiobiotin + ADP + phosphate + 3 H(+). It functions in the pathway cofactor biosynthesis; biotin biosynthesis; biotin from 7,8-diaminononanoate: step 1/2. Functionally, catalyzes a mechanistically unusual reaction, the ATP-dependent insertion of CO2 between the N7 and N8 nitrogen atoms of 7,8-diaminopelargonic acid (DAPA, also called 7,8-diammoniononanoate) to form a ureido ring. The sequence is that of ATP-dependent dethiobiotin synthetase BioD from Aliivibrio fischeri (strain MJ11) (Vibrio fischeri).